A 377-amino-acid chain; its full sequence is MHKQLPVICVAAGIVLLAACTNDGGQQQTTVAPQPAVCNGPTVEISGAEPRYEPLNPTANQDYQRDGKSYKIVQDPSRFSQAGLAAIYDAEPGSNLTASGEMFDPMQLTAAHPTLPIPSYARITNLANGRMIVVRINDRGLYGTDRVISLSRAAADRLNTSNNTKVRIDPIIVAPDGSLSGPGMACTTVAKQTYALPPRPDLSGGMGSASSAPAQPQGDVLPVSNSTLKSDDTTGAPVSSSGFLGAPTTLAPGVLEGNEPTPAPQTAPVSAPVTAPATATPVSAPAAAAPVSAPVSAPAAAASGRFVVQVGAVSDQTRAQQYQQRLSQQFSVPGRVIQNGAVWRIQLGPFASKAEASALQQRLQTEAQLQSFIASAQ.

The signal sequence occupies residues 1–19; that stretch reads MHKQLPVICVAAGIVLLAA. A lipid anchor (N-palmitoyl cysteine) is attached at cysteine 20. A lipid anchor (S-diacylglycerol cysteine) is attached at cysteine 20. Residues 196-277 are disordered; that stretch reads LPPRPDLSGG…PVSAPVTAPA (82 aa). Low complexity-rich tracts occupy residues 208–218 and 264–277; these read SASSAPAQPQG and PQTA…TAPA. One can recognise an SPOR domain in the interval 300-376; it reads AAASGRFVVQ…AQLQSFIASA (77 aa).

It belongs to the RlpA family.

It is found in the cell membrane. Its function is as follows. Lytic transglycosylase with a strong preference for naked glycan strands that lack stem peptides. The protein is Endolytic peptidoglycan transglycosylase RlpA of Salmonella typhi.